Reading from the N-terminus, the 1010-residue chain is 2-oxoglutarate dehydrogenase-like, mitochondrial (1010 aa).

The transit peptide at 1-73 (MSQLRLLPSR…RSVHKSWDSF (73 aa)) directs the protein to the mitochondrion. Residues His-130, Asp-143, and Asp-145 each coordinate Ca(2+). Thiamine diphosphate-binding residues include Arg-299, Asp-398, Asn-431, Ile-433, and Gln-663. Mg(2+) contacts are provided by Asp-398, Asn-431, and Ile-433.

This sequence belongs to the alpha-ketoglutarate dehydrogenase family. As to quaternary structure, the OGDHC complex comprises multiple copies of three catalytic enzyme components, the 2-oxoglutarate dehydrogenase (OGDH/E1), the dihydrolipoamide dehydrogenase (DLST/E2) and the dihydrolipoamide dehydrogenase (DLD/E3). OGDHL/E1-like isoenzyme may replace OGDH in the OGDHC complex in the brain. The presence of either ODGH/E1 or ODGHL/E1-like isoenzyme in the complex may depend on its tissular distribution. The cofactor is thiamine diphosphate. Mg(2+) is required as a cofactor.

It is found in the mitochondrion matrix. The enzyme catalyses N(6)-[(R)-lipoyl]-L-lysyl-[protein] + 2-oxoglutarate + H(+) = N(6)-[(R)-S(8)-succinyldihydrolipoyl]-L-lysyl-[protein] + CO2. In terms of biological role, 2-oxoglutarate dehydrogenase (E1-like) component of the 2-oxoglutarate dehydrogenase multienzyme complex (OGDHC) which mediates the decarboxylation of alpha-ketoglutarate in the tricarboxylic acid cycle. The OGDHC complex catalyzes the overall conversion of 2-oxoglutarate to succinyl-CoA and CO(2) while reducing NAD(+) to NADH. The OGDHC complex is mainly active in the mitochondrion. Involved in the inhibition of cell proliferation and in apoptosis. In Pongo abelii (Sumatran orangutan), this protein is 2-oxoglutarate dehydrogenase-like, mitochondrial (OGDHL).